Here is a 329-residue protein sequence, read N- to C-terminus: Vomeronasal type-1 receptor 43 (329 aa).

The Extracellular portion of the chain corresponds to 1-32 (MSKILFFSPCSLFSHTMNKNSRLHTNSNIGNT). The helical transmembrane segment at 33-53 (FFSEIGIGITGNSFLLLYHIL) threads the bilayer. The Cytoplasmic segment spans residues 54 to 65 (KFIRGHRPRLTD). The helical transmembrane segment at 66–86 (LPIGLLSLIHLLMLLVAAFIA) threads the bilayer. The Extracellular portion of the chain corresponds to 87–109 (TDIFISRRGWDDIICKFLVYLYR). C101 and C188 are disulfide-bonded. Residues 110–130 (VLRGLSLCTTSMLSVLQAIIL) traverse the membrane as a helical segment. Over 131 to 147 (SPRSSCLSKFKHISLHH) the chain is Cytoplasmic. The chain crosses the membrane as a helical span at residues 148 to 168 (ILCAILFLSVLYMLISSQLLV). Residues 169–209 (SIIATPNLTTNDLTYVTQSCSILPLSYLVESINSTLLAIRE) lie on the Extracellular side of the membrane. Residues N175 and N201 are each glycosylated (N-linked (GlcNAc...) asparagine). A helical membrane pass occupies residues 210–230 (YFLISLMFLSTWYIVALLCMH). At 231–255 (RKQTQHLQETRLSLKKSPEQSATQT) the chain is on the cytoplasmic side. A helical membrane pass occupies residues 256–276 (ILMLMTFFVLMTIYDNIVSCL). The Extracellular portion of the chain corresponds to 277 to 285 (RTMLLNDPT). A helical transmembrane segment spans residues 286–306 (SYSIELFMIHIYATVSPFVFM). The Cytoplasmic portion of the chain corresponds to 307–329 (SNEKHIVNFLRSMGKRMINLNLH).

It belongs to the G-protein coupled receptor 1 family.

It is found in the cell membrane. Functionally, putative pheromone receptor implicated in the regulation of social and reproductive behavior. The protein is Vomeronasal type-1 receptor 43 (Vmn1r43) of Mus musculus (Mouse).